The following is a 226-amino-acid chain: ATP synthase F(0) complex subunit a (226 aa).

6 helical membrane passes run 6 to 26 (FAPFITPTVLGISVLPLIMIF), 68 to 88 (WTLMLITLIIFIASTNLLGLL), 97 to 117 (QLSMNMGMAIPLWMGTVLMGF), 138 to 158 (IPMLIIIETISLFIQPLALAV), 164 to 184 (ITAGHLLIHLIGSATLALSSI), and 193 to 213 (FTILFLLTILEFAVALIQAYV).

Belongs to the ATPase A chain family. Component of the ATP synthase complex composed at least of ATP5F1A/subunit alpha, ATP5F1B/subunit beta, ATP5MC1/subunit c (homooctomer), MT-ATP6/subunit a, MT-ATP8/subunit 8, ATP5ME/subunit e, ATP5MF/subunit f, ATP5MG/subunit g, ATP5MK/subunit k, ATP5MJ/subunit j, ATP5F1C/subunit gamma, ATP5F1D/subunit delta, ATP5F1E/subunit epsilon, ATP5PF/subunit F6, ATP5PB/subunit b, ATP5PD/subunit d, ATP5PO/subunit OSCP. ATP synthase complex consists of a soluble F(1) head domain (subunits alpha(3) and beta(3)) - the catalytic core - and a membrane F(0) domain - the membrane proton channel (subunits c, a, 8, e, f, g, k and j). These two domains are linked by a central stalk (subunits gamma, delta, and epsilon) rotating inside the F1 region and a stationary peripheral stalk (subunits F6, b, d, and OSCP). Interacts with DNAJC30; interaction is direct.

The protein resides in the mitochondrion inner membrane. It carries out the reaction H(+)(in) = H(+)(out). Functionally, subunit a, of the mitochondrial membrane ATP synthase complex (F(1)F(0) ATP synthase or Complex V) that produces ATP from ADP in the presence of a proton gradient across the membrane which is generated by electron transport complexes of the respiratory chain. ATP synthase complex consist of a soluble F(1) head domain - the catalytic core - and a membrane F(1) domain - the membrane proton channel. These two domains are linked by a central stalk rotating inside the F(1) region and a stationary peripheral stalk. During catalysis, ATP synthesis in the catalytic domain of F(1) is coupled via a rotary mechanism of the central stalk subunits to proton translocation. With the subunit c (ATP5MC1), forms the proton-conducting channel in the F(0) domain, that contains two crucial half-channels (inlet and outlet) that facilitate proton movement from the mitochondrial intermembrane space (IMS) into the matrix. Protons are taken up via the inlet half-channel and released through the outlet half-channel, following a Grotthuss mechanism. In Ornithorhynchus anatinus (Duckbill platypus), this protein is ATP synthase F(0) complex subunit a.